Here is a 376-residue protein sequence, read N- to C-terminus: N-acetyldiaminopimelate deacetylase (376 aa).

Asp-69 is an active-site residue. Catalysis depends on Glu-128, which acts as the Proton acceptor.

This sequence belongs to the peptidase M20A family. N-acetyldiaminopimelate deacetylase subfamily.

The catalysed reaction is N-acetyl-(2S,6S)-2,6-diaminopimelate + H2O = (2S,6S)-2,6-diaminopimelate + acetate. The protein operates within amino-acid biosynthesis; L-lysine biosynthesis via DAP pathway; LL-2,6-diaminopimelate from (S)-tetrahydrodipicolinate (acetylase route): step 3/3. In terms of biological role, catalyzes the conversion of N-acetyl-diaminopimelate to diaminopimelate and acetate. The protein is N-acetyldiaminopimelate deacetylase of Bacillus cereus (strain AH820).